We begin with the raw amino-acid sequence, 1472 residues long: Vacuolar cation-transporting ATPase YPK9 (1472 aa).

Met1 carries the N-acetylmethionine modification. 2 stretches are compositionally biased toward polar residues: residues 1–12 and 72–87; these read MDIPSSNQIQHG and SFQS…SGNL. Disordered regions lie at residues 1–32, 71–115, and 179–273; these read MDIP…TATT, HSFQ…SRNP, and AKSY…DDVH. At 1 to 293 the chain is on the cytoplasmic side; it reads MDIPSSNQIQ…YHEKFYPQYA (293 aa). Thr95 bears the Phosphothreonine mark. Low complexity-rich tracts occupy residues 103–115 and 211–222; these read SSAE…SRNP and SATHSSSSLSRY. A Phosphoserine modification is found at Ser108. The span at 234–243 shows a compositional bias: acidic residues; it reads SQTDEILEDE. A helical membrane pass occupies residues 294 to 315; sequence PNLHYQRFYIAEEDLVIGIAAY. The Vacuolar segment spans residues 316–321; that stretch reads QTSKFW. A helical transmembrane segment spans residues 322 to 344; the sequence is YIIYNLCCFLTFGLVYLLTRWLP. The Cytoplasmic portion of the chain corresponds to 345–488; the sequence is HLKVKLYGVK…INLRMKTTSE (144 aa). Residues 489-511 traverse the membrane as a helical segment; sequence ILFNEVLHPFYVFQVFSIILWGI. At 512–514 the chain is on the vacuolar side; sequence DEY. The chain crosses the membrane as a helical span at residues 515 to 533; that stretch reads YYYAACIFLISVLSIFDSL. Topologically, residues 534–693 are cytoplasmic; the sequence is NEQKKVSRNL…PTGFKFYRDS (160 aa). The chain crosses the membrane as a helical span at residues 694 to 713; that stretch reads FKYIGFMSLIAIFGFCVSCV. Residues 714–726 are Vacuolar-facing; that stretch reads QFIKLGLDKKTMI. The helical transmembrane segment at 727 to 748 threads the bilayer; it reads LRALDIITIVVPPALPATLTIG. The Cytoplasmic portion of the chain corresponds to 749-1244; it reads TNFALSRLKE…ALVTSFACFQ (496 aa). Residue Asp781 is the 4-aspartylphosphate intermediate of the active site. Ser1117 and Ser1120 each carry phosphoserine. Residues Asp1187 and Asp1191 each coordinate Mg(2+). Residues 1245 to 1264 form a helical membrane-spanning segment; the sequence is YMSLYSAIQFITITILYSRG. Topologically, residues 1265 to 1271 are vacuolar; the sequence is SNLGDFQ. The helical transmembrane segment at 1272-1289 threads the bilayer; sequence FLYIDLLLIVPIAICMSW. Residues 1290–1307 are Cytoplasmic-facing; it reads SKSYEKIDKKRPSANLVS. Residues 1308–1331 form a helical membrane-spanning segment; that stretch reads PKILVPLLISVFLVFLFQFIPWII. The Vacuolar segment spans residues 1332–1351; sequence VQKMSWYIKPIVGGDDAVQS. A helical membrane pass occupies residues 1352–1374; sequence SDNTVLFFVSNFQYILTAIVLSV. Topologically, residues 1375–1387 are cytoplasmic; the sequence is GPPYREPMSKNFE. Residues 1388–1407 form a helical membrane-spanning segment; sequence FIVDITVSIGASLLLMTLDT. Residues 1408-1423 lie on the Vacuolar side of the membrane; the sequence is ESYLGKMLQLTPISNS. Residues 1424 to 1446 traverse the membrane as a helical segment; it reads FTMFIIVWVILNYYAQLYIPPSI. Topologically, residues 1447–1472 are cytoplasmic; the sequence is KGWLKKKKSSKKYKLLIQEEMKLKEV.

The protein belongs to the cation transport ATPase (P-type) (TC 3.A.3) family. Type V subfamily.

The protein resides in the vacuole membrane. It carries out the reaction ATP + H2O = ADP + phosphate + H(+). Vacuolar transporter which plays a role in sequestration of divalent heavy metal ions. The sequence is that of Vacuolar cation-transporting ATPase YPK9 (YPK9) from Saccharomyces cerevisiae (strain ATCC 204508 / S288c) (Baker's yeast).